The chain runs to 393 residues: S-adenosylmethionine synthase 3 (393 aa).

Glu-43 lines the K(+) pocket. L-methionine-binding residues include Glu-56 and Gln-99. ATP contacts are provided by residues 167-169, 235-238, Asp-246, 252-253, Ala-269, Lys-273, and Lys-277; these read DGK, SGRF, and RK. Residue Asp-246 coordinates L-methionine. Residue Lys-277 coordinates L-methionine.

The protein belongs to the AdoMet synthase family. In terms of assembly, homotetramer. Requires Mn(2+) as cofactor. Mg(2+) is required as a cofactor. The cofactor is Co(2+). K(+) serves as cofactor.

It is found in the cytoplasm. The enzyme catalyses L-methionine + ATP + H2O = S-adenosyl-L-methionine + phosphate + diphosphate. It participates in amino-acid biosynthesis; S-adenosyl-L-methionine biosynthesis; S-adenosyl-L-methionine from L-methionine: step 1/1. Catalyzes the formation of S-adenosylmethionine from methionine and ATP. The reaction comprises two steps that are both catalyzed by the same enzyme: formation of S-adenosylmethionine (AdoMet) and triphosphate, and subsequent hydrolysis of the triphosphate. The protein is S-adenosylmethionine synthase 3 (SAM3) of Actinidia chinensis var. chinensis (Chinese soft-hair kiwi).